A 368-amino-acid chain; its full sequence is MMSSSSPTQLASLRDMGIYEPFQQIVGWGNVFKSDINDHSPNTATSSIIQVDPRIDDHNNNIKINYDSSHNQIEAEQPSSNDNQDDDGRIHDKMKRRLAQNREAARKSRLRKKAYVQQLEESRLKLSQLEQELEKVKQQGHLGPSGSINTGIASFEMEYSHWLQEQSRRVSELRTALQSHISDIELKMLVESCLNHYANLFQMKSDAAKADVFYLISGMWRTSTERFFQWIGGFRPSELLNVVMPYLQPLTDQQILEVRNLQQSSQQAEDALSQGIDKLQQSLAESIVIDAVIESTHYPTHMAAAIENLQALEGFVNQADHLRQQTLQQMAKILTTRQSARGLLALGEYLHRLRALSSLWAARPQEPT.

The segment covering 70-82 has biased composition (polar residues); sequence HNQIEAEQPSSND. The disordered stretch occupies residues 70–89; the sequence is HNQIEAEQPSSNDNQDDDGR. The bZIP domain maps to 91–151; the sequence is HDKMKRRLAQ…LGPSGSINTG (61 aa). 2 coiled-coil regions span residues 92–142 and 252–285; these read DKMK…QGHL and DQQI…SLAE. A basic motif region spans residues 93-113; sequence KMKRRLAQNREAARKSRLRKK. The tract at residues 119-133 is leucine-zipper; it reads LEESRLKLSQLEQEL. The DOG1 domain occupies 152 to 363; it reads IASFEMEYSH…RALSSLWAAR (212 aa).

This sequence belongs to the bZIP family. Binds DNA as a dimer. Interacts with NPR1 and NPR4. Interacts with GRXC7/ROXY1.

The protein resides in the nucleus. In terms of biological role, transcriptional activator that binds specifically to the DNA sequence 5'-TGACG-3'. Recognizes ocs elements like the as-1 motif of the cauliflower mosaic virus 35S promoter. Binding to the as-1-like cis elements mediate auxin- and salicylic acid-inducible transcription. May be involved in the induction of the systemic acquired resistance (SAR) via its interaction with NPR1. The protein is Transcription factor TGA7 (TGA7) of Arabidopsis thaliana (Mouse-ear cress).